The sequence spans 344 residues: Holliday junction branch migration complex subunit RuvB (344 aa).

The interval 1 to 185 (MSTSRSDALK…FGIDFRYDYY (185 aa)) is large ATPase domain (RuvB-L). Residues L24, R25, G66, K69, T70, T71, 132–134 (EDY), R175, Y185, and R222 each bind ATP. T70 contributes to the Mg(2+) binding site. The segment at 186-256 (TADLLQEITQ…IADRALNALD (71 aa)) is small ATPAse domain (RuvB-S). A head domain (RuvB-H) region spans residues 259 to 344 (EEGLDDMDAR…AADQDLFDQE (86 aa)). The DNA site is built by R314 and R319.

It belongs to the RuvB family. In terms of assembly, homohexamer. Forms an RuvA(8)-RuvB(12)-Holliday junction (HJ) complex. HJ DNA is sandwiched between 2 RuvA tetramers; dsDNA enters through RuvA and exits via RuvB. An RuvB hexamer assembles on each DNA strand where it exits the tetramer. Each RuvB hexamer is contacted by two RuvA subunits (via domain III) on 2 adjacent RuvB subunits; this complex drives branch migration. In the full resolvosome a probable DNA-RuvA(4)-RuvB(12)-RuvC(2) complex forms which resolves the HJ.

Its subcellular location is the cytoplasm. The enzyme catalyses ATP + H2O = ADP + phosphate + H(+). The RuvA-RuvB-RuvC complex processes Holliday junction (HJ) DNA during genetic recombination and DNA repair, while the RuvA-RuvB complex plays an important role in the rescue of blocked DNA replication forks via replication fork reversal (RFR). RuvA specifically binds to HJ cruciform DNA, conferring on it an open structure. The RuvB hexamer acts as an ATP-dependent pump, pulling dsDNA into and through the RuvAB complex. RuvB forms 2 homohexamers on either side of HJ DNA bound by 1 or 2 RuvA tetramers; 4 subunits per hexamer contact DNA at a time. Coordinated motions by a converter formed by DNA-disengaged RuvB subunits stimulates ATP hydrolysis and nucleotide exchange. Immobilization of the converter enables RuvB to convert the ATP-contained energy into a lever motion, pulling 2 nucleotides of DNA out of the RuvA tetramer per ATP hydrolyzed, thus driving DNA branch migration. The RuvB motors rotate together with the DNA substrate, which together with the progressing nucleotide cycle form the mechanistic basis for DNA recombination by continuous HJ branch migration. Branch migration allows RuvC to scan DNA until it finds its consensus sequence, where it cleaves and resolves cruciform DNA. The protein is Holliday junction branch migration complex subunit RuvB of Salinibacter ruber (strain DSM 13855 / M31).